The chain runs to 311 residues: Solute carrier family 25 member 48 (311 aa).

3 Solcar repeats span residues 3–86 (SFQL…TQRF), 101–205 (RTLS…LSEW), and 214–301 (PSPC…SLQA). The next 6 membrane-spanning stretches (helical) occupy residues 9-29 (FAAG…LDTV), 61-81 (GMSF…GVFS), 107-127 (LLAS…VDLI), 189-209 (VPGY…ITPE), 217-237 (CAVW…ATPM), and 277-295 (ITVN…FLGY).

It belongs to the mitochondrial carrier (TC 2.A.29) family.

It localises to the mitochondrion inner membrane. This chain is Solute carrier family 25 member 48 (SLC25A48), found in Homo sapiens (Human).